Reading from the N-terminus, the 469-residue chain is Tryptophan biosynthesis protein TrpCF (469 aa).

The segment at 1-271 is indole-3-glycerol phosphate synthase; that stretch reads MSEQLSEHIS…LAVRKIVLGE (271 aa). The interval 272–469 is N-(5'-phosphoribosyl)anthranilate isomerase; it reads HKVCGLTHPD…QQVFQQLRNY (198 aa).

This sequence in the N-terminal section; belongs to the TrpC family. It in the C-terminal section; belongs to the TrpF family. As to quaternary structure, monomer.

It catalyses the reaction N-(5-phospho-beta-D-ribosyl)anthranilate = 1-(2-carboxyphenylamino)-1-deoxy-D-ribulose 5-phosphate. The catalysed reaction is 1-(2-carboxyphenylamino)-1-deoxy-D-ribulose 5-phosphate + H(+) = (1S,2R)-1-C-(indol-3-yl)glycerol 3-phosphate + CO2 + H2O. It participates in amino-acid biosynthesis; L-tryptophan biosynthesis; L-tryptophan from chorismate: step 3/5. Its pathway is amino-acid biosynthesis; L-tryptophan biosynthesis; L-tryptophan from chorismate: step 4/5. In terms of biological role, bifunctional enzyme that catalyzes two sequential steps of tryptophan biosynthetic pathway. The first reaction is catalyzed by the isomerase, coded by the TrpF domain; the second reaction is catalyzed by the synthase, coded by the TrpC domain. The protein is Tryptophan biosynthesis protein TrpCF (trpCF) of Vibrio cholerae serotype O1 (strain ATCC 39315 / El Tor Inaba N16961).